Here is a 263-residue protein sequence, read N- to C-terminus: MRPFEDSPISRDGKVLILAYDHGLEHGPVDFEAVPATKDPEAVWDVATHDAVSAMAAQKGIAEAYYPSYSDDVNLLAKLNGTSNLWMGEPDSAVNWTVDYAADVGADAVGFTLYGGSNSEVEMAEEFRDAQEAARDHDLPVVMWSYPRGQGLKNDKNPDTIAYAARQALELGADIAKVKYPGSTDAMSHAVDMAGPTNVVMSGGSKTSDRDFLESVKGAIDAGASGLAVGRNVWQREHPAAFLDGLEAVVYEEASVDEALGRI.

Residue K177 is the Schiff-base intermediate with dihydroxyacetone-P of the active site.

It belongs to the DeoC/FbaB aldolase family.

The catalysed reaction is beta-D-fructose 1,6-bisphosphate = D-glyceraldehyde 3-phosphate + dihydroxyacetone phosphate. In terms of biological role, has aldolase activity with fructose 1,6-bisphosphate. May play a role in the biosynthesis of aromatic amino acids (AroAA). The protein is Fructose-bisphosphate aldolase class 1 (fba1) of Halobacterium salinarum (strain ATCC 29341 / DSM 671 / R1).